The following is a 348-amino-acid chain: N-acetyl-gamma-glutamyl-phosphate reductase (348 aa).

Residue Cys-151 is part of the active site.

This sequence belongs to the NAGSA dehydrogenase family. Type 1 subfamily.

It is found in the cytoplasm. It carries out the reaction N-acetyl-L-glutamate 5-semialdehyde + phosphate + NADP(+) = N-acetyl-L-glutamyl 5-phosphate + NADPH + H(+). Its pathway is amino-acid biosynthesis; L-arginine biosynthesis; N(2)-acetyl-L-ornithine from L-glutamate: step 3/4. Functionally, catalyzes the NADPH-dependent reduction of N-acetyl-5-glutamyl phosphate to yield N-acetyl-L-glutamate 5-semialdehyde. The chain is N-acetyl-gamma-glutamyl-phosphate reductase from Lachnospira eligens (strain ATCC 27750 / DSM 3376 / VPI C15-48 / C15-B4) (Eubacterium eligens).